The chain runs to 251 residues: Ubiquinone/menaquinone biosynthesis C-methyltransferase UbiE (251 aa).

S-adenosyl-L-methionine contacts are provided by residues Thr-74, Asp-95, 123 to 124 (NA), and Ser-140.

It belongs to the class I-like SAM-binding methyltransferase superfamily. MenG/UbiE family.

The catalysed reaction is a 2-demethylmenaquinol + S-adenosyl-L-methionine = a menaquinol + S-adenosyl-L-homocysteine + H(+). The enzyme catalyses a 2-methoxy-6-(all-trans-polyprenyl)benzene-1,4-diol + S-adenosyl-L-methionine = a 5-methoxy-2-methyl-3-(all-trans-polyprenyl)benzene-1,4-diol + S-adenosyl-L-homocysteine + H(+). The protein operates within quinol/quinone metabolism; menaquinone biosynthesis; menaquinol from 1,4-dihydroxy-2-naphthoate: step 2/2. It participates in cofactor biosynthesis; ubiquinone biosynthesis. In terms of biological role, methyltransferase required for the conversion of demethylmenaquinol (DMKH2) to menaquinol (MKH2) and the conversion of 2-polyprenyl-6-methoxy-1,4-benzoquinol (DDMQH2) to 2-polyprenyl-3-methyl-6-methoxy-1,4-benzoquinol (DMQH2). The sequence is that of Ubiquinone/menaquinone biosynthesis C-methyltransferase UbiE from Yersinia enterocolitica serotype O:8 / biotype 1B (strain NCTC 13174 / 8081).